Here is a 252-residue protein sequence, read N- to C-terminus: 5-oxoprolinase subunit A (252 aa).

The protein belongs to the LamB/PxpA family. Forms a complex composed of PxpA, PxpB and PxpC.

The catalysed reaction is 5-oxo-L-proline + ATP + 2 H2O = L-glutamate + ADP + phosphate + H(+). Its function is as follows. Catalyzes the cleavage of 5-oxoproline to form L-glutamate coupled to the hydrolysis of ATP to ADP and inorganic phosphate. This chain is 5-oxoprolinase subunit A, found in Mycolicibacterium gilvum (strain PYR-GCK) (Mycobacterium gilvum (strain PYR-GCK)).